Here is a 470-residue protein sequence, read N- to C-terminus: Methylenetetrahydrofolate--tRNA-(uracil-5-)-methyltransferase TrmFO (470 aa).

10–15 (GAGLAG) is a binding site for FAD.

Belongs to the MnmG family. TrmFO subfamily. FAD is required as a cofactor.

It localises to the cytoplasm. The catalysed reaction is uridine(54) in tRNA + (6R)-5,10-methylene-5,6,7,8-tetrahydrofolate + NADH + H(+) = 5-methyluridine(54) in tRNA + (6S)-5,6,7,8-tetrahydrofolate + NAD(+). It catalyses the reaction uridine(54) in tRNA + (6R)-5,10-methylene-5,6,7,8-tetrahydrofolate + NADPH + H(+) = 5-methyluridine(54) in tRNA + (6S)-5,6,7,8-tetrahydrofolate + NADP(+). Functionally, catalyzes the folate-dependent formation of 5-methyl-uridine at position 54 (M-5-U54) in all tRNAs. This Prochlorococcus marinus (strain MIT 9312) protein is Methylenetetrahydrofolate--tRNA-(uracil-5-)-methyltransferase TrmFO.